Reading from the N-terminus, the 252-residue chain is 3-deoxy-manno-octulosonate cytidylyltransferase (252 aa).

The protein belongs to the KdsB family.

It is found in the cytoplasm. The enzyme catalyses 3-deoxy-alpha-D-manno-oct-2-ulosonate + CTP = CMP-3-deoxy-beta-D-manno-octulosonate + diphosphate. Its pathway is nucleotide-sugar biosynthesis; CMP-3-deoxy-D-manno-octulosonate biosynthesis; CMP-3-deoxy-D-manno-octulosonate from 3-deoxy-D-manno-octulosonate and CTP: step 1/1. The protein operates within bacterial outer membrane biogenesis; lipopolysaccharide biosynthesis. Its function is as follows. Activates KDO (a required 8-carbon sugar) for incorporation into bacterial lipopolysaccharide in Gram-negative bacteria. The sequence is that of 3-deoxy-manno-octulosonate cytidylyltransferase from Rhodospirillum rubrum (strain ATCC 11170 / ATH 1.1.1 / DSM 467 / LMG 4362 / NCIMB 8255 / S1).